Here is a 369-residue protein sequence, read N- to C-terminus: Core histone macro-H2A.1 (369 aa).

The Histone H2A domain occupies 2–117 (SSRGGKKKST…NIHPELLAKK (116 aa)). An N6-lactoyllysine; alternate mark is found at Lys7 and Lys9. Lys18 bears the N6-methyllysine mark. Lys116 is modified (N6-acetyllysine; alternate). Residue Lys116 forms a Glycyl lysine isopeptide (Lys-Gly) (interchain with G-Cter in ubiquitin); alternate linkage. Lys117 participates in a covalent cross-link: Glycyl lysine isopeptide (Lys-Gly) (interchain with G-Cter in ubiquitin). Lys123 bears the N6-acetyllysine; alternate mark. An N6,N6-dimethyllysine; alternate modification is found at Lys123. Lys123 is covalently cross-linked (Glycyl lysine isopeptide (Lys-Gly) (interchain with G-Cter in SUMO2); alternate). The tract at residues 128-180 (ITPPPAKKAKSPSQKKPVSKKAGGKKGARKSKKKQGEVSKAASADSTTEGTPA) is disordered. At Thr129 the chain carries Phosphothreonine. Over residues 144-160 (PVSKKAGGKKGARKSKK) the composition is skewed to basic residues. A Glycyl lysine isopeptide (Lys-Gly) (interchain with G-Cter in SUMO2) cross-link involves residue Lys167. Residues Ser170 and Ser173 each carry the phosphoserine modification. Residue Thr178 is modified to Phosphothreonine. The Macro domain occupies 184-367 (TVLSTKSLFL…IYVQEMAKLD (184 aa)). Residue Lys189 forms a Glycyl lysine isopeptide (Lys-Gly) (interchain with G-Cter in SUMO2) linkage. Residues Asp203, Ile204, Val226, Ser275, Gly312, Ser313, Gly314, and Asn316 each coordinate a glycoprotein. Lys320 participates in a covalent cross-link: Glycyl lysine isopeptide (Lys-Gly) (interchain with G-Cter in SUMO2).

Belongs to the histone H2A family. In terms of assembly, the nucleosome is a histone octamer containing two molecules each of H2A, H2B, H3 and H4 assembled in one H3-H4 heterotetramer and two H2A-H2B heterodimers. Interacts with HDAC1 and HDAC2. Interacts with SPOP. Part of a complex consisting of MACROH2A1, CUL3 and SPOP. As to quaternary structure, interacts with PARP1. Monoubiquitinated at either Lys-116 or Lys-117. May also be polyubiquitinated. Ubiquitination is mediated by the CUL3/SPOP E3 complex and does not promote proteasomal degradation. Instead, it is required for enrichment in inactive X chromosome chromatin. In terms of tissue distribution, widely expressed.

It localises to the nucleus. Its subcellular location is the chromosome. Variant histone H2A which replaces conventional H2A in a subset of nucleosomes where it represses transcription. Nucleosomes wrap and compact DNA into chromatin, limiting DNA accessibility to the cellular machineries which require DNA as a template. Histones thereby play a central role in transcription regulation, DNA repair, DNA replication and chromosomal stability. DNA accessibility is regulated via a complex set of post-translational modifications of histones, also called histone code, and nucleosome remodeling. Involved in stable X chromosome inactivation. Inhibits the binding of transcription factors, including NF-kappa-B, and interferes with the activity of remodeling SWI/SNF complexes. Inhibits histone acetylation by EP300 and recruits class I HDACs, which induces a hypoacetylated state of chromatin. In terms of biological role, isoform that specifically binds poly-ADP-ribose and O-acetyl-ADP-ribose and plays a key role in NAD(+) metabolism. Able to bind to the ends of poly-ADP-ribose chains created by PARP1 and cap them. This prevents PARP1 from further addition of ADP-ribose and thus limits the consumption of nuclear NAD(+), allowing the cell to maintain proper NAD(+) levels in both the nucleus and the mitochondria to promote proper mitochondrial respiration. Increases the expression of genes involved in redox metabolism, including SOD3. Its function is as follows. In contrast to isoform 1, does not bind poly-ADP-ribose. Represses SOD3 gene expression. The sequence is that of Core histone macro-H2A.1 from Homo sapiens (Human).